We begin with the raw amino-acid sequence, 519 residues long: Putative cytochrome P450 CYP13A10 (519 aa).

Residues 3-23 (VILLAIPTLFIGFISYYLWIW) traverse the membrane as a helical segment. A heme-binding site is contributed by cysteine 465.

Belongs to the cytochrome P450 family. Heme serves as cofactor.

The protein resides in the membrane. Cytochromes P450 are a group of heme-thiolate monooxygenases. They oxidize a variety of structurally unrelated compounds, including steroids, fatty acids, and xenobiotics. The protein is Putative cytochrome P450 CYP13A10 (cyp-13A10) of Caenorhabditis elegans.